Here is a 126-residue protein sequence, read N- to C-terminus: Protein LLP homolog (126 aa).

Over residues 1–21 (MAKSLRSKWRRKMRAEKRKKV) the composition is skewed to basic residues. 2 disordered regions span residues 1-22 (MAKS…KKVA) and 53-126 (VPPE…RLAW). The span at 73–94 (DGGKMDLDTKRNKKTMLDEHGR) shows a compositional bias: basic and acidic residues. Residues 103–126 (QAKKLKAKRVGKNGKPKPKKRLAW) show a composition bias toward basic residues.

It belongs to the learning-associated protein family.

The protein localises to the nucleus. It localises to the nucleolus. The protein resides in the chromosome. Regulates dendritic and spine growth and synaptic transmission. This is Protein LLP homolog (llph) from Danio rerio (Zebrafish).